A 127-amino-acid chain; its full sequence is Small ribosomal subunit protein eS8 (127 aa).

Belongs to the eukaryotic ribosomal protein eS8 family. Part of the 30S ribosomal subunit.

This chain is Small ribosomal subunit protein eS8, found in Pyrococcus furiosus (strain ATCC 43587 / DSM 3638 / JCM 8422 / Vc1).